The chain runs to 105 residues: MATGTPDSQARFGQSVKGLLTEKVNTCGTDVIALTKQVLKGSRSSELLGQAARNMVLQEDAILHSEDSLRKMAIITTHLQYQQEAIQKNVEQSSNLQDQLNHLLK.

The protein belongs to the BORCS7 family. In terms of assembly, component of the BLOC-one-related complex (BORC) which is composed of BLOC1S1, BLOC1S2, BORCS5, BORCS6, BORCS7, BORCS8, KXD1 and SNAPIN.

The protein localises to the lysosome membrane. Functionally, as part of the BORC complex may play a role in lysosomes movement and localization at the cell periphery. Associated with the cytosolic face of lysosomes, the BORC complex may recruit ARL8B and couple lysosomes to microtubule plus-end-directed kinesin motor. This is BLOC-1-related complex subunit 7 from Bos taurus (Bovine).